Consider the following 224-residue polypeptide: Glutamate/aspartate import permease protein GltK (224 aa).

Residues 1–19 are Periplasmic-facing; sequence MYEFDWSSIVPSLPYLLDG. Residues 20–40 form a helical membrane-spanning segment; that stretch reads LVITLKITVTAVVIGILWGTM. The ABC transmembrane type-1 domain occupies 20 to 216; that stretch reads LVITLKITVT…VISLSASLLV (197 aa). The Cytoplasmic segment spans residues 41–67; the sequence is LAVMRLSSFAPVAWFAKAYVNVFRSIP. A helical transmembrane segment spans residues 68–88; sequence LVMVLLWFYLIVPGFLQNVLG. Residues 89-94 are Periplasmic-facing; sequence LSPKND. Residues 95–112 traverse the membrane as a helical segment; it reads IRLISAMVAFSMFEAAYY. At 113 to 154 the chain is on the cytoplasmic side; it reads SEIIRAGIQSISRGQSSAALALGMTHWQSMKLIILPQAFRAM. A helical transmembrane segment spans residues 155–175; the sequence is VPLLLTQGIVLFQDTSLVYVL. Over 176 to 196 the chain is Periplasmic; that stretch reads SLADFFRTASTIGERDGTQVE. Residues 197–217 traverse the membrane as a helical segment; it reads MILFAGFVYFVISLSASLLVS. Residues 218-224 lie on the Cytoplasmic side of the membrane; that stretch reads YLKRRTA.

The protein belongs to the binding-protein-dependent transport system permease family. HisMQ subfamily. The complex is composed of two ATP-binding proteins (GltL), two transmembrane proteins (GltJ and GltK) and a solute-binding protein (GltI).

The protein localises to the cell inner membrane. Part of the ABC transporter complex GltIJKL involved in glutamate and aspartate uptake. Probably responsible for the translocation of the substrate across the membrane. The protein is Glutamate/aspartate import permease protein GltK (gltK) of Escherichia coli O157:H7.